We begin with the raw amino-acid sequence, 685 residues long: Protein snwA (685 aa).

Disordered regions lie at residues 1–62, 88–112, 347–573, and 605–685; these read MTSL…GYLP, RKGK…TSIV, LAED…DSIY, and AVSN…SKKR. 2 stretches are compositionally biased toward low complexity: residues 30 to 41 and 93 to 102; these read PQQQKQQQQQQQ and KSSNSNTSNM. The interval 194–360 is SNW; sequence ATYIKYTPSN…VRNERSGIIQ (167 aa). Positions 370-381 are enriched in acidic residues; that stretch reads DSDNDNDNDSSS. The segment covering 399-494 has biased composition (basic and acidic residues); that stretch reads RSTERIPSRN…DRYSKRRSDS (96 aa). Over residues 495–507 the composition is skewed to acidic residues; sequence DSDSDSDSSDSED. Residues 508 to 556 show a composition bias toward basic and acidic residues; sequence ERVRRERKEKLERDKIRMEKKRELEREYRLEASGKKSKFNRDQDRDISE. Residues 618–631 are compositionally biased toward polar residues; the sequence is EDNTSIQDVLSNSR. The segment covering 646–685 has biased composition (basic and acidic residues); that stretch reads PNKEFSGTDRSKDRTGPVAFEKEKKKSDDPFGFDDFSKKR.

The protein belongs to the SNW family. As to quaternary structure, interacts with cypE.

It localises to the nucleus. The polypeptide is Protein snwA (snwA) (Dictyostelium discoideum (Social amoeba)).